A 387-amino-acid polypeptide reads, in one-letter code: Double C2-like domain-containing protein gamma (387 aa).

C2 domains lie at 83 to 209 (ALGT…DICL) and 243 to 376 (ERGR…ELWH). Aspartate 274, aspartate 280, aspartate 334, aspartate 336, and aspartate 342 together coordinate Ca(2+).

Ca(2+) is required as a cofactor.

Its function is as follows. May be involved in regulation of vesicular trafficking. In vitro, does not bind calcium and phospholipids. This chain is Double C2-like domain-containing protein gamma (Doc2g), found in Mus musculus (Mouse).